Reading from the N-terminus, the 400-residue chain is S-adenosylmethionine decarboxylase proenzyme (400 aa).

Active-site residues include E18 and E21. S78 (schiff-base intermediate with substrate; via pyruvic acid) is an active-site residue. The residue at position 78 (S78) is a Pyruvic acid (Ser); by autocatalysis. The active-site Proton donor; for catalytic activity is the C92. Active-site proton acceptor; for processing activity residues include S243 and H256.

The protein belongs to the eukaryotic AdoMetDC family. Pyruvate serves as cofactor. In terms of processing, is synthesized initially as an inactive proenzyme. Formation of the active enzyme involves a self-maturation process in which the active site pyruvoyl group is generated from an internal serine residue via an autocatalytic post-translational modification. Two non-identical subunits are generated from the proenzyme in this reaction, and the pyruvate is formed at the N-terminus of the alpha chain, which is derived from the carboxyl end of the proenzyme. The post-translation cleavage follows an unusual pathway, termed non-hydrolytic serinolysis, in which the side chain hydroxyl group of the serine supplies its oxygen atom to form the C-terminus of the beta chain, while the remainder of the serine residue undergoes an oxidative deamination to produce ammonia and the pyruvoyl group blocking the N-terminus of the alpha chain.

The enzyme catalyses S-adenosyl-L-methionine + H(+) = S-adenosyl 3-(methylsulfanyl)propylamine + CO2. It participates in amine and polyamine biosynthesis; S-adenosylmethioninamine biosynthesis; S-adenosylmethioninamine from S-adenosyl-L-methionine: step 1/1. This Zea mays (Maize) protein is S-adenosylmethionine decarboxylase proenzyme (SAMDC).